Reading from the N-terminus, the 375-residue chain is MVDNSKIRVVVGMSGGVDSSVSALLLKQQGYDVVGVFMKNWDDTNDDGVCTATEDYEDVKKVADKIGIPYYSINFEKEYWERVFQYFLKEYKAGRTPNPDIMCNTEVKFKSFLEYALDLDADYLAMGHYAKTMVDENGVTHMMRPKDGNKDQTYFLSQLTQEQIKRVMFPLQDLTKPEVRRIAEEAGLVNAKKKDSTGICFIGERNFKHFLSEFLPAQGGDMVTPDGKVVGHHAGLMYYTIGQRQGLGLGSTKESTAPWFVVGKDLEKNQLIVEQGYDSPRLYADRLQASGMTFFTGNPEEDTEFKATAKFRYRQCDVGVTVKYHAASKTADVYFDEPARAVTPGQALVLYNGEECLGGGNIDAAFKDDKKLQLV.

ATP contacts are provided by residues 12-19 (GMSGGVDS) and M38. The segment at 98-100 (NPD) is interaction with target base in tRNA. C103 acts as the Nucleophile in catalysis. An intrachain disulfide couples C103 to C200. G127 is an ATP binding site. Residues 150–152 (KDQ) are interaction with tRNA. The active-site Cysteine persulfide intermediate is the C200. An interaction with tRNA region spans residues 312–313 (RY).

The protein belongs to the MnmA/TRMU family.

It localises to the cytoplasm. The enzyme catalyses S-sulfanyl-L-cysteinyl-[protein] + uridine(34) in tRNA + AH2 + ATP = 2-thiouridine(34) in tRNA + L-cysteinyl-[protein] + A + AMP + diphosphate + H(+). In terms of biological role, catalyzes the 2-thiolation of uridine at the wobble position (U34) of tRNA, leading to the formation of s(2)U34. This is tRNA-specific 2-thiouridylase MnmA from Lactobacillus delbrueckii subsp. bulgaricus (strain ATCC 11842 / DSM 20081 / BCRC 10696 / JCM 1002 / NBRC 13953 / NCIMB 11778 / NCTC 12712 / WDCM 00102 / Lb 14).